The following is a 267-amino-acid chain: Expansin-B10 (267 aa).

A signal peptide spans 1 to 22; sequence MASSCLLLACVVAAAMVSAVSC. An N-linked (GlcNAc...) asparagine glycan is attached at asparagine 32. Residues 61 to 167 form the Expansin-like EG45 domain; sequence GGACGYKDID…RRVRCKYPGE (107 aa). Disulfide bonds link cysteine 64-cysteine 92, cysteine 95-cysteine 162, and cysteine 100-cysteine 106. Positions 181-262 constitute an Expansin-like CBD domain; it reads NYFAVLVKYV…NWKANALYKS (82 aa). Asparagine 213 carries an N-linked (GlcNAc...) asparagine glycan.

Belongs to the expansin family. Expansin B subfamily.

Its subcellular location is the secreted. The protein localises to the cell wall. It localises to the membrane. Its function is as follows. May cause loosening and extension of plant cell walls by disrupting non-covalent bonding between cellulose microfibrils and matrix glucans. No enzymatic activity has been found. May be required for rapid internodal elongation in deepwater rice during submergence. This is Expansin-B10 (EXPB10) from Oryza sativa subsp. japonica (Rice).